A 411-amino-acid chain; its full sequence is S-inosyl-L-homocysteine hydrolase (411 aa).

Residues Asp121 and Glu146 each coordinate substrate. 147-149 provides a ligand contact to NAD(+); sequence TTT. The substrate site is built by Lys176 and Asp180. NAD(+)-binding positions include Asn181, 210 to 215, Glu233, Asn268, 289 to 291, and Asn335; these read GYGWCG and SGH.

The protein belongs to the adenosylhomocysteinase family. NAD(+) serves as cofactor.

It is found in the cytoplasm. It catalyses the reaction S-inosyl-L-homocysteine + H2O = L-homocysteine + inosine. Its pathway is amino-acid biosynthesis; S-adenosyl-L-methionine biosynthesis. In terms of biological role, catalyzes the hydrolysis of S-inosyl-L-homocysteine (SIH) to L-homocysteine (Hcy) and inosine. Likely functions in a S-adenosyl-L-methionine (SAM) recycling pathway from S-adenosyl-L-homocysteine (SAH) produced from SAM-dependent methylation reactions. Can also catalyze the reverse reaction in vitro, i.e. the synthesis of SIH from Hcy and inosine. This Methanosarcina mazei (strain ATCC BAA-159 / DSM 3647 / Goe1 / Go1 / JCM 11833 / OCM 88) (Methanosarcina frisia) protein is S-inosyl-L-homocysteine hydrolase.